The sequence spans 138 residues: UPF0047 protein MJ1081 (138 aa).

This sequence belongs to the UPF0047 family.

In Methanocaldococcus jannaschii (strain ATCC 43067 / DSM 2661 / JAL-1 / JCM 10045 / NBRC 100440) (Methanococcus jannaschii), this protein is UPF0047 protein MJ1081.